The following is a 318-amino-acid chain: MANTLEQLKSYTTIVADTGDIEAIKRYQPEDATTNPSLILKAAQIPEYRALIDNAIAWAKLQSADIEQQIDDASDKLAVNIGVEILKLVPGRISTEVDARLSFDKEKSIAKAHKLVRLYQEAGVDKSRILIKLASTWEGICAAKELEQEGINCNLTLLFSFAQARACAEAGVYLISPFVGRILDWYKNDTGKDYDAVNDPGVVSVTEIYNYYKQHGYNTVVMGASFRNIGEIIELAGCDRLTIGPSLLEELANSQVAIQPKLLPASTTVAAGEPLTEAQFRWDFNQDPMAVDKLAEGIRNFAIDQGKLEVMLKAKLAN.

Lysine 132 acts as the Schiff-base intermediate with substrate in catalysis.

Belongs to the transaldolase family. Type 1 subfamily. Homodimer.

The protein localises to the cytoplasm. It carries out the reaction D-sedoheptulose 7-phosphate + D-glyceraldehyde 3-phosphate = D-erythrose 4-phosphate + beta-D-fructose 6-phosphate. The protein operates within carbohydrate degradation; pentose phosphate pathway; D-glyceraldehyde 3-phosphate and beta-D-fructose 6-phosphate from D-ribose 5-phosphate and D-xylulose 5-phosphate (non-oxidative stage): step 2/3. In terms of biological role, transaldolase is important for the balance of metabolites in the pentose-phosphate pathway. In Shewanella sp. (strain ANA-3), this protein is Transaldolase.